A 464-amino-acid chain; its full sequence is Probable glycine dehydrogenase (decarboxylating) subunit 1 (464 aa).

This sequence belongs to the GcvP family. N-terminal subunit subfamily. The glycine cleavage system is composed of four proteins: P, T, L and H. In this organism, the P 'protein' is a heterodimer of two subunits.

The enzyme catalyses N(6)-[(R)-lipoyl]-L-lysyl-[glycine-cleavage complex H protein] + glycine + H(+) = N(6)-[(R)-S(8)-aminomethyldihydrolipoyl]-L-lysyl-[glycine-cleavage complex H protein] + CO2. The glycine cleavage system catalyzes the degradation of glycine. The P protein binds the alpha-amino group of glycine through its pyridoxal phosphate cofactor; CO(2) is released and the remaining methylamine moiety is then transferred to the lipoamide cofactor of the H protein. The chain is Probable glycine dehydrogenase (decarboxylating) subunit 1 from Thiobacillus denitrificans (strain ATCC 25259 / T1).